Here is a 188-residue protein sequence, read N- to C-terminus: Elongation factor P (188 aa).

This sequence belongs to the elongation factor P family.

The protein resides in the cytoplasm. It participates in protein biosynthesis; polypeptide chain elongation. Involved in peptide bond synthesis. Stimulates efficient translation and peptide-bond synthesis on native or reconstituted 70S ribosomes in vitro. Probably functions indirectly by altering the affinity of the ribosome for aminoacyl-tRNA, thus increasing their reactivity as acceptors for peptidyl transferase. In Azotobacter vinelandii (strain DJ / ATCC BAA-1303), this protein is Elongation factor P.